A 338-amino-acid chain; its full sequence is Glycerol-3-phosphate dehydrogenase [NAD(P)+] (338 aa).

Residues W11, R30, and K109 each contribute to the NADPH site. The sn-glycerol 3-phosphate site is built by K109, G143, and S145. NADPH is bound at residue A147. Sn-glycerol 3-phosphate contacts are provided by K198, D251, S261, R262, and N263. K198 serves as the catalytic Proton acceptor. R262 contacts NADPH. 2 residues coordinate NADPH: V286 and E288.

Belongs to the NAD-dependent glycerol-3-phosphate dehydrogenase family.

Its subcellular location is the cytoplasm. The catalysed reaction is sn-glycerol 3-phosphate + NAD(+) = dihydroxyacetone phosphate + NADH + H(+). It catalyses the reaction sn-glycerol 3-phosphate + NADP(+) = dihydroxyacetone phosphate + NADPH + H(+). It functions in the pathway membrane lipid metabolism; glycerophospholipid metabolism. Functionally, catalyzes the reduction of the glycolytic intermediate dihydroxyacetone phosphate (DHAP) to sn-glycerol 3-phosphate (G3P), the key precursor for phospholipid synthesis. This is Glycerol-3-phosphate dehydrogenase [NAD(P)+] from Cupriavidus necator (strain ATCC 17699 / DSM 428 / KCTC 22496 / NCIMB 10442 / H16 / Stanier 337) (Ralstonia eutropha).